The chain runs to 1010 residues: MGDKDDRFPKKKKGGTKDMDALKKEVPITEHKMSVEEVCRKFQTDVVQGLTNAKAAEFLLRDGPNALTPPPTTPEWVKFCRQLFGGFSILLWTGAILCFLAYAIQAATEDEPAGDNLYLGIVLTAVVVITGCFSYFQEAKSSKIMESFKNMVPQQALVIREGEKVQVNAEEVMAGDLIEVKGGDRIPADIRVTSAHGCKVDNSSLTGESEPQSRSPDCTHDNPLETRNIAFFSTNCVEGTARGIVICTGDRTVMGRIATLTSGLETGKTPIAVEIEHFIHIITGVAVFLGVTFFILAIILGYTWLKAVIFLIGIIVANVPEGLLATVTVCLTLTAKRMAKKNCLVKNLEAVETLGSTSTICSDKTGTLTQNRMTVAHMWFDNQIHEADTTEDQSGAAFDKSSVTWLSLSRVAPLCNRAQFKPRQDSVSILKRDVAGDASESALLKCIELSCGSVRMMRDKNKKVAEIPFNPTNKYQLSIHETEDPNDNRYLLVMKGALERILDRCSTIMLQGKEQPMDEEMKEAFQNAYMELGGLGERVLGFRHLLLPEDQYPKGFAFDTDDVNFQTDNLCFVGLMSMIDPPRAAVPDAVGKCRSAGIKVIMVTGDHPITAKAIAKGVGIISEGNETVEDIAARLNIPVSQVNPRDAKACVIHGSDLKDLSQDQMDDILRNHTEIVFARTSPQQKLIIVEGCQRLGAIVAVTGDGVNDSPALKKADIGVAMGISGSDVSKQAADMILLDDNFASIVTGVEEGRLIFDNLKKSIAYTLTSNIPEITPFLFFIIVNIPLALGTITILCIDLGTDMGSAISLAYETAESDIMKRQPRNPCRDKLVNERLISIAYGQIGMIQALGGFFSYFVILAENGFLPSQLVGIRLNWDDRSLNDLEDSYGQQWTYEQRKIVEFTCHTAFFVSIVVVQWADLIICKTRRNSVFQQGMKNKILIFGLFEETALAAFLSYCPGMDVALRMYPLKPTWWFWAFPYSFLIFVYDEARKLILCRNPGGWVEKETYY.

A disordered region spans residues 1-21 (MGDKDDRFPKKKKGGTKDMDA). The Cytoplasmic segment spans residues 1–74 (MGDKDDRFPK…NALTPPPTTP (74 aa)). The interaction with phosphoinositide-3 kinase stretch occupies residues 69-71 (PPP). Residues 75-95 (EWVKFCRQLFGGFSILLWTGA) form a helical membrane-spanning segment. Over 96–118 (ILCFLAYAIQAATEDEPAGDNLY) the chain is Extracellular. The chain crosses the membrane as a helical span at residues 119–139 (LGIVLTAVVVITGCFSYFQEA). Residues 140 to 275 (KSSKIMESFK…TGKTPIAVEI (136 aa)) lie on the Cytoplasmic side of the membrane. Over residues 201-216 (DNSSLTGESEPQSRSP) the composition is skewed to polar residues. Residues 201-221 (DNSSLTGESEPQSRSPDCTHD) are disordered. Residues 276–295 (EHFIHIITGVAVFLGVTFFI) traverse the membrane as a helical segment. At 296-307 (LAIILGYTWLKA) the chain is on the extracellular side. The helical transmembrane segment at 308-325 (VIFLIGIIVANVPEGLLA) threads the bilayer. At 326 to 759 (TVTVCLTLTA…EEGRLIFDNL (434 aa)) the chain is on the cytoplasmic side. Aspartate 363 serves as the catalytic 4-aspartylphosphate intermediate. Mg(2+) contacts are provided by aspartate 704 and aspartate 708. The chain crosses the membrane as a helical span at residues 760–779 (KKSIAYTLTSNIPEITPFLF). Over 780-789 (FIIVNIPLAL) the chain is Extracellular. A helical transmembrane segment spans residues 790–810 (GTITILCIDLGTDMGSAISLA). The Cytoplasmic segment spans residues 811–830 (YETAESDIMKRQPRNPCRDK). The helical transmembrane segment at 831-853 (LVNERLISIAYGQIGMIQALGGF) threads the bilayer. Residues 854-905 (FSYFVILAENGFLPSQLVGIRLNWDDRSLNDLEDSYGQQWTYEQRKIVEFTC) are Extracellular-facing. Residues 906 to 925 (HTAFFVSIVVVQWADLIICK) form a helical membrane-spanning segment. Over 926–938 (TRRNSVFQQGMKN) the chain is Cytoplasmic. Phosphoserine; by PKA is present on serine 930. Residues 939 to 957 (KILIFGLFEETALAAFLSY) form a helical membrane-spanning segment. Topologically, residues 958 to 972 (CPGMDVALRMYPLKP) are extracellular. A helical membrane pass occupies residues 973–993 (TWWFWAFPYSFLIFVYDEARK). Over 994 to 1010 (LILCRNPGGWVEKETYY) the chain is Cytoplasmic.

It belongs to the cation transport ATPase (P-type) (TC 3.A.3) family. Type IIC subfamily. In terms of assembly, the sodium/potassium-transporting ATPase is composed of a catalytic alpha subunit, an auxiliary non-catalytic beta subunit and an additional regulatory subunit.

The protein localises to the cell membrane. It catalyses the reaction K(+)(out) + Na(+)(in) + ATP + H2O = K(+)(in) + Na(+)(out) + ADP + phosphate + H(+). Its function is as follows. This is the catalytic component of the active enzyme, which catalyzes the hydrolysis of ATP coupled with the exchange of sodium and potassium ions across the plasma membrane. This action creates the electrochemical gradient of sodium and potassium ions, providing the energy for active transport of various nutrients. The chain is Sodium/potassium-transporting ATPase subunit alpha-3 (atp1a3) from Oreochromis mossambicus (Mozambique tilapia).